A 276-amino-acid polypeptide reads, in one-letter code: Rhamnulose-1-phosphate aldolase (276 aa).

Residue E117 is part of the active site. 3 residues coordinate Zn(2+): H141, H143, and H212.

Belongs to the aldolase class II family. RhaD subfamily. In terms of assembly, homotetramer. The cofactor is Zn(2+).

Its subcellular location is the cytoplasm. It catalyses the reaction L-rhamnulose 1-phosphate = (S)-lactaldehyde + dihydroxyacetone phosphate. It functions in the pathway carbohydrate degradation; L-rhamnose degradation; glycerone phosphate from L-rhamnose: step 3/3. Its function is as follows. Catalyzes the reversible cleavage of L-rhamnulose-1-phosphate to dihydroxyacetone phosphate (DHAP) and L-lactaldehyde. This chain is Rhamnulose-1-phosphate aldolase, found in Klebsiella pneumoniae subsp. pneumoniae (strain ATCC 700721 / MGH 78578).